A 147-amino-acid chain; its full sequence is 3-dehydroquinate dehydratase (147 aa).

Catalysis depends on Y23, which acts as the Proton acceptor. The substrate site is built by N74, H80, and D87. H100 serves as the catalytic Proton donor. Substrate is bound by residues 101-102 (LS) and R111.

It belongs to the type-II 3-dehydroquinase family. As to quaternary structure, homododecamer.

The enzyme catalyses 3-dehydroquinate = 3-dehydroshikimate + H2O. The protein operates within metabolic intermediate biosynthesis; chorismate biosynthesis; chorismate from D-erythrose 4-phosphate and phosphoenolpyruvate: step 3/7. Functionally, catalyzes a trans-dehydration via an enolate intermediate. This chain is 3-dehydroquinate dehydratase, found in Clostridium botulinum (strain 657 / Type Ba4).